We begin with the raw amino-acid sequence, 187 residues long: Probable DNA-directed RNA polymerase subunit delta (187 aa).

The 68-residue stretch at 14–81 (LSMIEVAHAL…GNNVWALRSW (68 aa)) folds into the HTH HARE-type domain. The interval 96–187 (EIEDEEEEKP…EDDSDDTDED (92 aa)) is disordered. Composition is skewed to acidic residues over residues 117–149 (IEDE…EDKD) and 157–187 (ELAE…TDED).

The protein belongs to the RpoE family. RNAP is composed of a core of 2 alpha, a beta and a beta' subunits. The core is associated with a delta subunit and one of several sigma factors.

Participates in both the initiation and recycling phases of transcription. In the presence of the delta subunit, RNAP displays an increased specificity of transcription, a decreased affinity for nucleic acids, and an increased efficiency of RNA synthesis because of enhanced recycling. This chain is Probable DNA-directed RNA polymerase subunit delta, found in Lactococcus lactis subsp. cremoris (strain SK11).